The following is a 122-amino-acid chain: Guanine nucleotide exchange factor MSS4 homolog (122 aa).

In terms of domain architecture, MSS4 spans glutamate 9–lysine 120. Residues cysteine 22, cysteine 25, cysteine 92, and cysteine 95 each contribute to the Zn(2+) site.

This sequence belongs to the DSS4/MSS4 family. Interacts with Rab8.

The protein localises to the basal cell membrane. Functionally, guanine-nucleotide-releasing protein that acts on members of the sec4/ypt1/rab subfamily such as Rab8. During egg development, essential for establishing and maintaining epithelial cell polarity by regulating the correct polarized deposition of basal membrane (BM) proteins such as trol/Pcan and vkg/Coll IV to the basal surface of follicular epithelial (FE) cells. Likely to function by restricting the activity of the vesicle transport regulator Rab8 to the basal membrane, and thus directs BM protein-containing vesicles to the basal side of the FE cells. This function is independent of the Crag/Rab10 regulation of polarized BM protein secretion in the FE. In Drosophila melanogaster (Fruit fly), this protein is Guanine nucleotide exchange factor MSS4 homolog.